A 382-amino-acid polypeptide reads, in one-letter code: Galactokinase (382 aa).

34–37 (EHTD) is a substrate binding site. 124–130 (GAGLSSS) contributes to the ATP binding site. Mg(2+) is bound by residues serine 130 and glutamate 162. Aspartate 174 acts as the Proton acceptor in catalysis. Tyrosine 223 contacts substrate.

Belongs to the GHMP kinase family. GalK subfamily.

Its subcellular location is the cytoplasm. It carries out the reaction alpha-D-galactose + ATP = alpha-D-galactose 1-phosphate + ADP + H(+). It participates in carbohydrate metabolism; galactose metabolism. Catalyzes the transfer of the gamma-phosphate of ATP to D-galactose to form alpha-D-galactose-1-phosphate (Gal-1-P). The protein is Galactokinase of Escherichia coli O7:K1 (strain IAI39 / ExPEC).